Here is a 160-residue protein sequence, read N- to C-terminus: MACIYPTTFYTSLPTKSLNMGISLTTILILSVAVLLSTAAPPSCRECYQSLHYRGEMQQYFTYHTHIERSCYGNLIEECVESGKSYYKVKNLGVCGSRNGAICPRGKQWLCFTKIGQWGVNTQVLEDIKREQIIAKAKASKPTTPPENRPRHFHSFIQKL.

The first 39 residues, 1–39 (MACIYPTTFYTSLPTKSLNMGISLTTILILSVAVLLSTA), serve as a signal peptide directing secretion. A disordered region spans residues 137 to 160 (AKASKPTTPPENRPRHFHSFIQKL).

As to quaternary structure, interacts (secreted) with SLC1A5; mainly at cell surface. In terms of tissue distribution, specifically expressed in placenta by extravillous trophoblasts and syncytiotrophoblasts (at protein level).

The protein resides in the secreted. Its function is as follows. May play a role in trophoblasts syncytialization, the spontaneous fusion of their plasma membranes, an essential process in placental development. May negatively regulate cell-cell fusion by interacting with SLC1A5, the probable receptor on the cell surface of the fusogenic syncytin-1/ERVW-1. This Homo sapiens (Human) protein is Suppressyn (ERVH48-1).